The following is a 698-amino-acid chain: Long-chain-fatty-acid--CoA ligase 1 (698 aa).

Met-1 carries the N-acetylmethionine modification. Position 9 is a 3'-nitrotyrosine (Tyr-9). A Phosphotyrosine modification is found at Tyr-84. Ser-135 carries an O-linked (GlcNAc) serine glycan. N6-acetyllysine is present on residues Lys-356 and Lys-386. Ser-620 carries the phosphoserine modification. The residue at position 632 (Lys-632) is an N6-acetyllysine.

The protein belongs to the ATP-dependent AMP-binding enzyme family. The cofactor is Mg(2+).

It localises to the microsome membrane. It is found in the mitochondrion outer membrane. Its subcellular location is the peroxisome membrane. The protein localises to the endoplasmic reticulum membrane. The enzyme catalyses a long-chain fatty acid + ATP + CoA = a long-chain fatty acyl-CoA + AMP + diphosphate. It catalyses the reaction (5Z,8Z,11Z,14Z)-eicosatetraenoate + ATP + CoA = (5Z,8Z,11Z,14Z)-eicosatetraenoyl-CoA + AMP + diphosphate. The catalysed reaction is 3,7,11,15-tetramethylhexadecanoate + ATP + CoA = phytanoyl-CoA + AMP + diphosphate. It carries out the reaction hexadecanoate + ATP + CoA = hexadecanoyl-CoA + AMP + diphosphate. The enzyme catalyses (E)-hexadec-2-enoate + ATP + CoA = (2E)-hexadecenoyl-CoA + AMP + diphosphate. It catalyses the reaction 2,6,10,14-tetramethylpentadecanoate + ATP + CoA = pristanoyl-CoA + AMP + diphosphate. The catalysed reaction is 14,15-epoxy-(5Z,8Z,11Z)-eicosatrienoate + ATP + CoA = 14,15-epoxy-(5Z,8Z,11Z)-eicosatrienoyl-CoA + AMP + diphosphate. It carries out the reaction 5-hydroxy-(6E,8Z,11Z,14Z)-eicosatetraenoate + ATP + CoA = 5-hydroxy-(6E,8Z,11Z,14Z)-eicosatetraenoyl-CoA + AMP + diphosphate. The enzyme catalyses 12-hydroxy-(5Z,8Z,10E,14Z)-eicosatetraenoate + ATP + CoA = 12-hydroxy-(5Z,8Z,10E,14Z)-eicosatetraenoyl-CoA + AMP + diphosphate. It catalyses the reaction 15-hydroxy-(5Z,8Z,11Z,13E)-eicosatetraenoate + ATP + CoA = 15-hydroxy-(5Z,8Z,11Z,13E)-eicosatetraenoyl-CoA + AMP + diphosphate. The catalysed reaction is (9Z)-octadecenoate + ATP + CoA = (9Z)-octadecenoyl-CoA + AMP + diphosphate. Its activity is regulated as follows. Inhibited at high temperature and by arachidonate. Functionally, catalyzes the conversion of long-chain fatty acids to their active form acyl-CoAs for both synthesis of cellular lipids, and degradation via beta-oxidation. Preferentially uses palmitoleate, oleate and linoleate. Preferentially activates arachidonate than epoxyeicosatrienoic acids (EETs) or hydroxyeicosatrienoic acids (HETEs). In Cavia porcellus (Guinea pig), this protein is Long-chain-fatty-acid--CoA ligase 1.